Here is a 363-residue protein sequence, read N- to C-terminus: Probable auxin efflux carrier component 5a (363 aa).

A run of 10 helical transmembrane segments spans residues 7-27, 39-59, 72-92, 103-123, 134-154, 222-242, 246-266, 281-301, 307-327, and 342-362; these read VYKVVAATVPLYFALFLGYGS, CDAVNRLVAFFALPFFTFEFT, VAADVISKAVIVAVIGAWARF, SITSFSLSTLTNSLVVGVPMA, LVVQLSVFQAIVWLTLLLFVL, FVGITWACLANRLHIALPSAF, VLIMSKSGTGMAMFSMGLFMA, LGLVLKFALGPAAMAIGSIAV, VLRVAIIQAALPQSITSFIFA, and IFGMLVSLPLLVGFYIVLELI.

Belongs to the auxin efflux carrier (TC 2.A.69.1) family. As to expression, expressed in leaves, shoot apex and panicles. Expressed in roots, stem bases, stems, leaves and young panicles.

It localises to the membrane. Functionally, may act as a component of the auxin efflux carrier. The protein is Probable auxin efflux carrier component 5a of Oryza sativa subsp. japonica (Rice).